Here is a 356-residue protein sequence, read N- to C-terminus: DNA-directed RNA polymerase subunit alpha (356 aa).

An alpha N-terminal domain (alpha-NTD) region spans residues 1–259 (MIKAAATLKS…KLMTACLTTL (259 aa)). The interval 277-356 (FVQVNYNKME…STYGIELKED (80 aa)) is alpha C-terminal domain (alpha-CTD).

Belongs to the RNA polymerase alpha chain family. As to quaternary structure, in plastids the minimal PEP RNA polymerase catalytic core is composed of four subunits: alpha, beta, beta', and beta''. When a (nuclear-encoded) sigma factor is associated with the core the holoenzyme is formed, which can initiate transcription.

It is found in the plastid. The protein localises to the chloroplast. It catalyses the reaction RNA(n) + a ribonucleoside 5'-triphosphate = RNA(n+1) + diphosphate. DNA-dependent RNA polymerase catalyzes the transcription of DNA into RNA using the four ribonucleoside triphosphates as substrates. This Ostreococcus tauri protein is DNA-directed RNA polymerase subunit alpha.